The sequence spans 153 residues: 3-hydroxyacyl-[acyl-carrier-protein] dehydratase FabZ (153 aa).

His-57 is a catalytic residue.

This sequence belongs to the thioester dehydratase family. FabZ subfamily.

The protein resides in the cytoplasm. The catalysed reaction is a (3R)-hydroxyacyl-[ACP] = a (2E)-enoyl-[ACP] + H2O. Its function is as follows. Involved in unsaturated fatty acids biosynthesis. Catalyzes the dehydration of short chain beta-hydroxyacyl-ACPs and long chain saturated and unsaturated beta-hydroxyacyl-ACPs. The polypeptide is 3-hydroxyacyl-[acyl-carrier-protein] dehydratase FabZ (Vibrio cholerae serotype O1 (strain ATCC 39315 / El Tor Inaba N16961)).